We begin with the raw amino-acid sequence, 64 residues long: Large ribosomal subunit protein uL30 (64 aa).

Belongs to the universal ribosomal protein uL30 family. In terms of assembly, part of the 50S ribosomal subunit.

In Rhodopseudomonas palustris (strain BisA53), this protein is Large ribosomal subunit protein uL30.